The following is a 231-amino-acid chain: MSRRKSPDSPLFQLEPVLPDFSFEITAKRDGFWPVAGADEAGRGPLAGPVVAAAVILDPDAVPGGLNDSKLLTAEQREALFTEIMATATVSIASSSAAHIDATDILKASLDAMRRAIDGLSIAARFALIDGRDVPQGLPCHAKAIVKGDSRSVSIAAASIVAKVTRDRMMARADATFPAYGFALHAGYATVRHRSAIDSHGPCSLHRMSFRPFREAQEQPLAVSTGPIDPN.

In terms of domain architecture, RNase H type-2 spans 33-222 (WPVAGADEAG…FREAQEQPLA (190 aa)). Positions 39, 40, and 130 each coordinate a divalent metal cation.

This sequence belongs to the RNase HII family. Requires Mn(2+) as cofactor. It depends on Mg(2+) as a cofactor.

It is found in the cytoplasm. It catalyses the reaction Endonucleolytic cleavage to 5'-phosphomonoester.. Functionally, endonuclease that specifically degrades the RNA of RNA-DNA hybrids. The polypeptide is Ribonuclease HII (Sinorhizobium fredii (strain NBRC 101917 / NGR234)).